Reading from the N-terminus, the 171-residue chain is Dual-action ribosomal maturation protein DarP (171 aa).

Positions 1–30 (MPKRPAENPEQSDDFVSKSQKKREMAERQE) are disordered.

This sequence belongs to the DarP family.

It localises to the cytoplasm. Its function is as follows. Member of a network of 50S ribosomal subunit biogenesis factors which assembles along the 30S-50S interface, preventing incorrect 23S rRNA structures from forming. Promotes peptidyl transferase center (PTC) maturation. In Idiomarina loihiensis (strain ATCC BAA-735 / DSM 15497 / L2-TR), this protein is Dual-action ribosomal maturation protein DarP.